A 648-amino-acid polypeptide reads, in one-letter code: Biosynthetic arginine decarboxylase (648 aa).

Lys109 carries the N6-(pyridoxal phosphate)lysine modification. Position 291 to 301 (291 to 301) interacts with substrate; that stretch reads IDVGGGLGIDF.

This sequence belongs to the Orn/Lys/Arg decarboxylase class-II family. SpeA subfamily. Requires Mg(2+) as cofactor. The cofactor is pyridoxal 5'-phosphate.

The catalysed reaction is L-arginine + H(+) = agmatine + CO2. The protein operates within amine and polyamine biosynthesis; agmatine biosynthesis; agmatine from L-arginine: step 1/1. Catalyzes the biosynthesis of agmatine from arginine. In Prochlorococcus marinus (strain MIT 9301), this protein is Biosynthetic arginine decarboxylase.